The sequence spans 109 residues: Phosphoribosyl-ATP pyrophosphatase (109 aa).

It belongs to the PRA-PH family.

Its subcellular location is the cytoplasm. It carries out the reaction 1-(5-phospho-beta-D-ribosyl)-ATP + H2O = 1-(5-phospho-beta-D-ribosyl)-5'-AMP + diphosphate + H(+). It functions in the pathway amino-acid biosynthesis; L-histidine biosynthesis; L-histidine from 5-phospho-alpha-D-ribose 1-diphosphate: step 2/9. The chain is Phosphoribosyl-ATP pyrophosphatase from Parvibaculum lavamentivorans (strain DS-1 / DSM 13023 / NCIMB 13966).